Here is a 233-residue protein sequence, read N- to C-terminus: Clathrin light chain (233 aa).

The interval 1–124 is disordered; sequence MSEKFPPLED…EDRSEVVDQW (124 aa). Residues 17–43 are compositionally biased toward basic and acidic residues; it reads PNDKKDDDTDFLKREAEILGDEFKTEQ. Residue Thr-49 is modified to Phosphothreonine. A Phosphoserine modification is found at Ser-52. Residues 56–67 are compositionally biased toward acidic residues; it reads DDDEIRDFEEQF. The span at 69-92 shows a compositional bias: polar residues; that stretch reads DINSANGAVSSDQNGSATVSSGND. Residues 112-124 are compositionally biased toward basic and acidic residues; that stretch reads SVKEDRSEVVDQW. Positions 125–186 form a coiled coil; that stretch reads KQRRAVEIHE…EAFLKKRDEF (62 aa). Residues 144–204 are involved in binding clathrin heavy chain; that stretch reads KELQDEAIKH…DRALQLINQD (61 aa).

Belongs to the clathrin light chain family. Clathrin coats are formed from molecules containing 3 heavy chains and 3 light chains. Interacts with the auxilin-like clathrin uncoating factor SWA2.

It is found in the cytoplasmic vesicle membrane. The protein resides in the membrane. It localises to the coated pit. Clathrin is the major protein of the polyhedral coat of coated pits and vesicles. In yeast, it is involved in the retention of proteins in an intracellular membrane compartment, presumably the trans-Golgi. The yeast light chain is important for cell growth. The light chain may help to properly orient the assembly/ disassembly of the clathrin coats. This is Clathrin light chain (CLC1) from Saccharomyces cerevisiae (strain ATCC 204508 / S288c) (Baker's yeast).